The following is a 151-amino-acid chain: MVVASAASPCESSALFATFDHDGDGRISAAELRLCMKTTLGEEVSDEEAGQLVASVDADGDGLLCEAEFVRLVQAAEVEEEDERRGTGLREAFGMYEMEGEGCITPTSLRRMLRRLGSDQDIDDCRAMICRFDLNGDGVLSFDEFKIMMNA.

EF-hand domains are found at residues 14–42 (ALFA…TLGE), 44–79 (VSDE…AEVE), 84–119 (RRGT…LGSD), and 120–151 (QDID…MMNA). Positions 20, 22, 24, 26, 31, 57, 59, 61, and 68 each coordinate Ca(2+). 4 residues coordinate Ca(2+): aspartate 133, asparagine 135, aspartate 137, and glutamate 144.

Potential calcium sensor. The protein is Probable calcium-binding protein CML31 (CML31) of Oryza sativa subsp. japonica (Rice).